A 132-amino-acid polypeptide reads, in one-letter code: Small ribosomal subunit protein uS8 (132 aa).

The protein belongs to the universal ribosomal protein uS8 family. Part of the 30S ribosomal subunit. Contacts proteins S5 and S12.

In terms of biological role, one of the primary rRNA binding proteins, it binds directly to 16S rRNA central domain where it helps coordinate assembly of the platform of the 30S subunit. In Clavibacter michiganensis subsp. michiganensis (strain NCPPB 382), this protein is Small ribosomal subunit protein uS8.